We begin with the raw amino-acid sequence, 314 residues long: uncharacterized protein (314 aa).

Helical transmembrane passes span 4 to 23 (FFIG…YFSG), 36 to 53 (FNKL…FVSI), 68 to 90 (TLVS…YKFF), 97 to 116 (AAVC…GFAV), 131 to 153 (VAII…LNPS), 174 to 196 (PVVW…PAAW), 200 to 222 (FNLI…LAAH), 229 to 251 (EIAY…VGMA), 261 to 283 (MMVL…RFNV), and 290 to 309 (ASLA…WIYV).

The protein belongs to the auxin efflux carrier (TC 2.A.69) family.

The protein localises to the cell membrane. This is an uncharacterized protein from Escherichia coli O157:H7.